A 188-amino-acid polypeptide reads, in one-letter code: Elongation factor P (188 aa).

Belongs to the elongation factor P family.

It localises to the cytoplasm. Its pathway is protein biosynthesis; polypeptide chain elongation. Its function is as follows. Involved in peptide bond synthesis. Stimulates efficient translation and peptide-bond synthesis on native or reconstituted 70S ribosomes in vitro. Probably functions indirectly by altering the affinity of the ribosome for aminoacyl-tRNA, thus increasing their reactivity as acceptors for peptidyl transferase. This Exiguobacterium sp. (strain ATCC BAA-1283 / AT1b) protein is Elongation factor P.